The following is an 805-amino-acid chain: ATP-dependent RNA helicase mak-5 (805 aa).

The segment covering 1–10 (MAVDKKRKNT) has biased composition (basic residues). Disordered stretches follow at residues 1 to 33 (MAVDKKRKNTKAPASGPKRRKTQPSSKQIKRPV) and 79 to 189 (VPKS…ELET). The span at 85-100 (EVEDDGEEFGGFDDEE) shows a compositional bias: acidic residues. 3 stretches are compositionally biased toward basic and acidic residues: residues 110–119 (QEVKTSETKA), 126–143 (AKEKKASKDQRKPKEQQK), and 164–189 (KNAEDKKKARKNEKTTVEPKDPELET). The Q motif motif lies at 209-237 (SEWVPLDLSPRMISSIAKLRFSKPTVIQS). In terms of domain architecture, Helicase ATP-binding spans 240 to 463 (IPEIMAGHDV…AGKSKFKATS (224 aa)). An ATP-binding site is contributed by 253 to 260 (ASTGSGKT). The DEAD box signature appears at 372-375 (DEAD). Over residues 390 to 406 (FKALDRPPVEENNEDQK) the composition is skewed to basic and acidic residues. Residues 390–435 (FKALDRPPVEENNEDQKMGGTDEEGQEEEEEDSEEEEEEEEEHVNK) are disordered. A compositionally biased stretch (acidic residues) spans 410 to 431 (TDEEGQEEEEEDSEEEEEEEEE). Residues 510-666 (YLYATLMLQP…NSGNNTKKLV (157 aa)) form the Helicase C-terminal domain. The tract at residues 729–751 (AGKWGGKGSSKKQKQKEAQQMSK) is disordered.

It belongs to the DEAD box helicase family. DDX24/MAK5 subfamily.

It is found in the nucleus. The protein localises to the nucleolus. It catalyses the reaction ATP + H2O = ADP + phosphate + H(+). Its function is as follows. ATP-binding RNA helicase involved in the biogenesis of 60S ribosomal subunits and is required for the normal formation of 25S and 5.8S rRNAs. In Neurospora crassa (strain ATCC 24698 / 74-OR23-1A / CBS 708.71 / DSM 1257 / FGSC 987), this protein is ATP-dependent RNA helicase mak-5 (mak-5).